Here is a 372-residue protein sequence, read N- to C-terminus: Glutamate 5-kinase (372 aa).

Residue Lys-14 participates in ATP binding. Substrate is bound by residues Ser-54, Asp-141, and Asn-153. 173 to 174 (TD) is an ATP binding site. One can recognise a PUA domain in the interval 280–358 (RGHVVIDDGA…GEIESVLGYM (79 aa)).

The protein belongs to the glutamate 5-kinase family.

The protein localises to the cytoplasm. It carries out the reaction L-glutamate + ATP = L-glutamyl 5-phosphate + ADP. The protein operates within amino-acid biosynthesis; L-proline biosynthesis; L-glutamate 5-semialdehyde from L-glutamate: step 1/2. Its function is as follows. Catalyzes the transfer of a phosphate group to glutamate to form L-glutamate 5-phosphate. This is Glutamate 5-kinase from Paraburkholderia xenovorans (strain LB400).